A 763-amino-acid polypeptide reads, in one-letter code: Autophagy-related protein 18f (763 aa).

2 WD repeats span residues 345-385 (AHKS…STSR) and 402-441 (FTNA…EGDA). A compositionally biased stretch (polar residues) spans 701–711 (NESIQSPSTTT). The disordered stretch occupies residues 701–763 (NESIQSPSTT…SEDEDEEQVD (63 aa)). Basic and acidic residues-rich tracts occupy residues 712–725 (QDDK…HGTE) and 741–754 (PVDK…KNHS).

The protein belongs to the WD repeat PROPPIN family. Component of the PI(3,5)P2 regulatory complex at least composed of ATG18, SAC/FIG4, FAB1 and VAC14. In terms of tissue distribution, expressed in roots, flowers and leaves.

It localises to the preautophagosomal structure membrane. The protein resides in the vacuole membrane. Its function is as follows. The PI(3,5)P2 regulatory complex regulates both the synthesis and turnover of phosphatidylinositol 3,5-bisphosphate (PtdIns(3,5)P2). Required for autophagy. This Arabidopsis thaliana (Mouse-ear cress) protein is Autophagy-related protein 18f (ATG18F).